A 480-amino-acid chain; its full sequence is Protein nucleotidyltransferase YdiU (480 aa).

Residues Gly86, Gly88, Arg89, Lys109, Asp121, Gly122, Arg172, and Arg179 each contribute to the ATP site. Asp248 serves as the catalytic Proton acceptor. Positions 249 and 258 each coordinate Mg(2+). Asp258 provides a ligand contact to ATP.

Belongs to the SELO family. Requires Mg(2+) as cofactor. Mn(2+) is required as a cofactor.

The catalysed reaction is L-seryl-[protein] + ATP = 3-O-(5'-adenylyl)-L-seryl-[protein] + diphosphate. The enzyme catalyses L-threonyl-[protein] + ATP = 3-O-(5'-adenylyl)-L-threonyl-[protein] + diphosphate. It carries out the reaction L-tyrosyl-[protein] + ATP = O-(5'-adenylyl)-L-tyrosyl-[protein] + diphosphate. It catalyses the reaction L-histidyl-[protein] + UTP = N(tele)-(5'-uridylyl)-L-histidyl-[protein] + diphosphate. The catalysed reaction is L-seryl-[protein] + UTP = O-(5'-uridylyl)-L-seryl-[protein] + diphosphate. The enzyme catalyses L-tyrosyl-[protein] + UTP = O-(5'-uridylyl)-L-tyrosyl-[protein] + diphosphate. In terms of biological role, nucleotidyltransferase involved in the post-translational modification of proteins. It can catalyze the addition of adenosine monophosphate (AMP) or uridine monophosphate (UMP) to a protein, resulting in modifications known as AMPylation and UMPylation. This chain is Protein nucleotidyltransferase YdiU, found in Salmonella paratyphi C (strain RKS4594).